Reading from the N-terminus, the 476-residue chain is Elongation factor Tu, chloroplastic (476 aa).

The N-terminal 67 residues, 1-67 (MAISAPAACS…QSTRRSFTVR (67 aa)), are a transit peptide targeting the chloroplast. Positions 77–281 (KPHVNIGTIG…AVDDYIPIPQ (205 aa)) constitute a tr-type G domain. Residues 86–93 (GHVDHGKT) form a G1 region. 86–93 (GHVDHGKT) contributes to the GTP binding site. The residue at position 94 (Thr94) is a Phosphothreonine. Positions 127-131 (GITIN) are G2. Residues 148 to 151 (DCPG) are G3. GTP-binding positions include 148-152 (DCPGH) and 203-206 (NKED). A G4 region spans residues 203-206 (NKED). A G5 region spans residues 241–243 (SAL).

It belongs to the TRAFAC class translation factor GTPase superfamily. Classic translation factor GTPase family. EF-Tu/EF-1A subfamily. As to quaternary structure, interacts with PI5K2. Interacts with APD2.

The protein resides in the plastid. It localises to the chloroplast. Functionally, this protein promotes the GTP-dependent binding of aminoacyl-tRNA to the A-site of ribosomes during protein biosynthesis. This is Elongation factor Tu, chloroplastic (TUFA) from Arabidopsis thaliana (Mouse-ear cress).